The chain runs to 785 residues: Mitochondrial intermediate peptidase (785 aa).

Residues 1 to 27 constitute a mitochondrion transit peptide; the sequence is MLKAVMPRPWVCSRCVKRQIQSSRGLA. Positions 26–52 are disordered; sequence LATASTQYREPRPVPTDHSAPGAKHDD. Residue His-566 coordinates Zn(2+). Residue Glu-567 is part of the active site. 2 residues coordinate Zn(2+): His-570 and His-573.

The protein belongs to the peptidase M3 family. Zn(2+) is required as a cofactor.

The protein resides in the mitochondrion matrix. It catalyses the reaction Release of an N-terminal octapeptide as second stage of processing of some proteins imported into the mitochondrion.. In terms of biological role, cleaves proteins, imported into the mitochondrion, to their mature size. While most mitochondrial precursor proteins are processed to the mature form in one step by mitochondrial processing peptidase (MPP), the sequential cleavage by MIP of an octapeptide after initial processing by MPP is a required step for a subgroup of nuclear-encoded precursor proteins destined for the matrix or the inner membrane. This chain is Mitochondrial intermediate peptidase (oct1), found in Sclerotinia sclerotiorum (strain ATCC 18683 / 1980 / Ss-1) (White mold).